Reading from the N-terminus, the 393-residue chain is L-methionine gamma-lyase (393 aa).

Pyridoxal 5'-phosphate is bound by residues 63-65 (YQR) and 93-94 (GM). Y119 contributes to the L-homocysteine binding site. 206-208 (SAT) lines the pyridoxal 5'-phosphate pocket. An N6-(pyridoxal phosphate)lysine modification is found at K209. R367 serves as a coordination point for L-homocysteine. R367 contributes to the L-methionine binding site.

Belongs to the trans-sulfuration enzymes family. L-methionine gamma-lyase subfamily. As to quaternary structure, homotetramer. It depends on pyridoxal 5'-phosphate as a cofactor.

It carries out the reaction L-methionine + H2O = methanethiol + 2-oxobutanoate + NH4(+). It catalyses the reaction L-homocysteine + H2O = 2-oxobutanoate + hydrogen sulfide + NH4(+) + H(+). Functionally, catalyzes the alpha,gamma-elimination of L-methionine to produce methanethiol, 2-oxobutanoate and ammonia. Is also able to catalyze the alpha,gamma-elimination of L-homocysteine. The chain is L-methionine gamma-lyase from Brevibacterium sandarakinum.